The chain runs to 233 residues: Transcriptional regulatory protein PrrA (233 aa).

Positions 9–123 (RVLVVDDDSD…ELVARVKALL (115 aa)) constitute a Response regulatory domain. Residue Asp-58 is modified to 4-aspartylphosphate. The ompR/PhoB-type DNA-binding region spans 134–232 (SETITVGPLE…VRGVGFVLRM (99 aa)).

Phosphorylated by PrrB at Asp-58.

It localises to the cytoplasm. Member of the two-component regulatory system PrrB/PrrA that is involved specifically in early intracellular multiplication of Mycobacterium and is essential for its viability. Upon phosphorylation by PrrB, functions as a transcription regulator by direct binding to promoter regions of target genes to positively regulate their expression. Autoregulates its own expression. The polypeptide is Transcriptional regulatory protein PrrA (prrA) (Mycobacterium bovis (strain ATCC BAA-935 / AF2122/97)).